The following is a 279-amino-acid chain: RRP15-like protein (279 aa).

3 disordered regions span residues 1 to 40, 56 to 120, and 200 to 279; these read MALLTAKRPKKEAAPATDTSNNESDSEDSQNVDGDTGANA, GPTV…TERR, and KSTA…DEED. Positions 73-83 are enriched in basic and acidic residues; the sequence is KTSEAAKKPGF. Acidic residues-rich tracts occupy residues 93 to 104 and 213 to 224; these read KEEDDDDEEDGD and QETDDDDEDDTA. The segment covering 232 to 245 has biased composition (basic and acidic residues); the sequence is KKSEWNVLREDFMT. Positions 267–279 are enriched in acidic residues; the sequence is DEADDSDDDDEED.

Belongs to the RRP15 family.

The protein is RRP15-like protein of Drosophila pseudoobscura pseudoobscura (Fruit fly).